The sequence spans 389 residues: Alpha-2B adrenergic receptor (389 aa).

Residues 1–25 traverse the membrane as a helical segment; it reads AIAAVITFLILFTIFGNALVILAVL. The Cytoplasmic segment spans residues 26-36; the sequence is TSRSLRAPQNL. The helical transmembrane segment at 37–62 threads the bilayer; it reads FLVSLAAADILVATLIIPFSLANELL. Residues 63 to 72 lie on the Extracellular side of the membrane; the sequence is GYWYFRRTWC. An intrachain disulfide couples C72 to C151. Residues 73 to 95 form a helical membrane-spanning segment; sequence EVYLALDVLFCTSSIVHLCAISL. Residues 96 to 117 are Cytoplasmic-facing; that stretch reads DRYWAVTRALEYNTKRTPRRIK. The chain crosses the membrane as a helical span at residues 118-140; the sequence is CIILTVWLIAAVISLPPLIYKGD. The Extracellular portion of the chain corresponds to 141–156; the sequence is QGPQPRGRPQCKLNQE. A helical transmembrane segment spans residues 157-180; the sequence is AWYILASSIGSFFAPCLIMILVYL. Topologically, residues 181–363 are cytoplasmic; sequence RIYLIAKRSH…LTREKRFTFV (183 aa). Disordered regions lie at residues 194–216 and 233–320; these read PRAK…AGAS and EANG…PLQQ. Residues 196-205 are compositionally biased toward gly residues; sequence AKGGPGGGGS. Residues 255 to 267 show a composition bias toward low complexity; it reads PALPSSWPALPSS. Acidic residues predominate over residues 280 to 302; that stretch reads LEEEAEEEEEEEEEEEEGEEECE. Positions 303–320 are enriched in low complexity; that stretch reads PQALPASPASACSPPLQQ. The chain crosses the membrane as a helical span at residues 364–387; that stretch reads LAVVIGVFVLCWFPFFFSYSLGAI. The Extracellular segment spans residues 388 to 389; sequence CP.

It belongs to the G-protein coupled receptor 1 family. Adrenergic receptor subfamily. ADRA2B sub-subfamily. In terms of assembly, interacts with RAB26. Interacts with PPP1R9B. Interacts with GGA1, GGA2 and GGA3.

Its subcellular location is the cell membrane. Functionally, alpha-2 adrenergic receptors mediate the catecholamine-induced inhibition of adenylate cyclase through the action of G proteins. This chain is Alpha-2B adrenergic receptor (ADRA2B), found in Equus caballus (Horse).